The sequence spans 407 residues: E3 ubiquitin-protein ligase TRIM13 (407 aa).

An RING-type zinc finger spans residues 10–58 (CPICCSLFDDPRVLPCSHNFCKKCLEGILEGNVRNSLWRSSPFKCPTCR). Residues 89 to 131 (PKMPVCKGHLGQPLNIFCLTDMQLICGICATRGEHTKHVFCSI) form a B box-type zinc finger. Zn(2+) is bound by residues C94, H97, C117, and H123. Residues 172 to 200 (LQLLTKDSDKVKEFFEKLQYTLDQKKNEI) are a coiled coil. A helical transmembrane segment spans residues 316–336 (PLFVVVILLGLLIFFSPTMFL).

In terms of assembly, interacts (via C-terminal domain) with VCP. Interacts with AKT1; the interaction ubiquitinates AKT1 and leads to its proteasomal degradation. Interacts with MDM2; the interaction ubiquitinates AKT1 and leads to its proteasomal degradation. Interacts with p62/SQSTM1. Interacts with TRAF6. Interacts with IKBKG/NEMO. Auto-ubiquitinated; requires the RING-type zinc finger. Auto-polyubiquitination leads to proteasomal degradation.

It localises to the endoplasmic reticulum membrane. The enzyme catalyses S-ubiquitinyl-[E2 ubiquitin-conjugating enzyme]-L-cysteine + [acceptor protein]-L-lysine = [E2 ubiquitin-conjugating enzyme]-L-cysteine + N(6)-ubiquitinyl-[acceptor protein]-L-lysine.. It participates in protein modification; protein ubiquitination. Endoplasmic reticulum (ER) membrane anchored E3 ligase involved in the retrotranslocation and turnover of membrane and secretory proteins from the ER through a set of processes named ER-associated degradation (ERAD). This process acts on misfolded proteins as well as in the regulated degradation of correctly folded proteins. Enhances ionizing radiation-induced p53/TP53 stability and apoptosis via ubiquitinating MDM2 and AKT1 and decreasing AKT1 kinase activity through MDM2 and AKT1 proteasomal degradation. Regulates ER stress-induced autophagy, and may act as a tumor suppressor. Also plays a role in innate immune response by stimulating NF-kappa-B activity in the TLR2 signaling pathway. Ubiquitinates TRAF6 via the 'Lys-29'-linked polyubiquitination chain resulting in NF-kappa-B activation. Participates as well in T-cell receptor-mediated NF-kappa-B activation. In the presence of TNF, modulates the IKK complex by regulating IKBKG/NEMO ubiquitination leading to the repression of NF-kappa-B. In Bos taurus (Bovine), this protein is E3 ubiquitin-protein ligase TRIM13 (TRIM13).